Here is a 118-residue protein sequence, read N- to C-terminus: Small ribosomal subunit protein uS17 (118 aa).

Belongs to the universal ribosomal protein uS17 family. In terms of assembly, part of the 30S ribosomal subunit.

Its function is as follows. One of the primary rRNA binding proteins, it binds specifically to the 5'-end of 16S ribosomal RNA. The protein is Small ribosomal subunit protein uS17 of Methanopyrus kandleri (strain AV19 / DSM 6324 / JCM 9639 / NBRC 100938).